Here is a 201-residue protein sequence, read N- to C-terminus: Recombination protein RecR (201 aa).

The segment at 60-75 (CSCCGNVDTIDPCTVC) adopts a C4-type zinc-finger fold. The Toprim domain occupies 83–178 (SVIIVVEDVS…KITRLAHGVP (96 aa)).

The protein belongs to the RecR family.

May play a role in DNA repair. It seems to be involved in an RecBC-independent recombinational process of DNA repair. It may act with RecF and RecO. The polypeptide is Recombination protein RecR (Agrobacterium fabrum (strain C58 / ATCC 33970) (Agrobacterium tumefaciens (strain C58))).